The sequence spans 158 residues: Methylated-DNA--protein-cysteine methyltransferase (158 aa).

Catalysis depends on Cys-126, which acts as the Nucleophile; methyl group acceptor.

This sequence belongs to the MGMT family.

The protein localises to the cytoplasm. The enzyme catalyses a 6-O-methyl-2'-deoxyguanosine in DNA + L-cysteinyl-[protein] = S-methyl-L-cysteinyl-[protein] + a 2'-deoxyguanosine in DNA. It catalyses the reaction a 4-O-methyl-thymidine in DNA + L-cysteinyl-[protein] = a thymidine in DNA + S-methyl-L-cysteinyl-[protein]. Involved in the cellular defense against the biological effects of O6-methylguanine (O6-MeG) and O4-methylthymine (O4-MeT) in DNA. Repairs the methylated nucleobase in DNA by stoichiometrically transferring the methyl group to a cysteine residue in the enzyme. This is a suicide reaction: the enzyme is irreversibly inactivated. This Methanosarcina barkeri (strain Fusaro / DSM 804) protein is Methylated-DNA--protein-cysteine methyltransferase.